The following is a 234-amino-acid chain: Large ribosomal subunit protein uL1c (234 aa).

Belongs to the universal ribosomal protein uL1 family. Part of the 50S ribosomal subunit.

The protein resides in the plastid. It localises to the chloroplast. Binds directly to 23S rRNA. Might be involved in E site tRNA release (Potential). The sequence is that of Large ribosomal subunit protein uL1c (rpl1) from Guillardia theta (Cryptophyte).